Consider the following 465-residue polypeptide: Putative ABC transporter ATP-binding protein MG065 homolog (465 aa).

In terms of domain architecture, ABC transporter spans 232-465 (IELKNVYKYI…PKQVEDINWI (234 aa)). 268–275 (GPSGSGKT) contributes to the ATP binding site.

Belongs to the ABC transporter superfamily.

The sequence is that of Putative ABC transporter ATP-binding protein MG065 homolog from Mycoplasma pneumoniae (strain ATCC 29342 / M129 / Subtype 1) (Mycoplasmoides pneumoniae).